Consider the following 377-residue polypeptide: Naringenin,2-oxoglutarate 3-dioxygenase (377 aa).

The region spanning 193–297 is the Fe2OG dioxygenase domain; that stretch reads CVDMDQKVVV…RLSIATFQNP (105 aa). Residues His-220, Asp-222, and His-278 each coordinate Fe cation. Position 288 (Arg-288) interacts with 2-oxoglutarate.

It belongs to the iron/ascorbate-dependent oxidoreductase family. Fe(2+) serves as cofactor. Requires L-ascorbate as cofactor.

The catalysed reaction is a (2S)-flavan-4-one + 2-oxoglutarate + O2 = a (2R,3R)-dihydroflavonol + succinate + CO2. It functions in the pathway secondary metabolite biosynthesis; flavonoid biosynthesis. Functionally, catalyzes the 3-beta-hydroxylation of 2S-flavanones to 2R,3R-dihydroflavonols which are intermediates in the biosynthesis of flavonols, anthocyanidins, catechins and proanthocyanidins in plants. The protein is Naringenin,2-oxoglutarate 3-dioxygenase of Hordeum vulgare (Barley).